The chain runs to 236 residues: Thiamine import ATP-binding protein ThiQ (236 aa).

The ABC transporter domain maps to Leu2 to Ile230. Residue Gly32 to Ser39 coordinates ATP.

It belongs to the ABC transporter superfamily. Thiamine importer (TC 3.A.1.19.1) family. As to quaternary structure, the complex is composed of two ATP-binding proteins (ThiQ), two transmembrane proteins (ThiP) and a solute-binding protein (ThiB).

The protein localises to the cell inner membrane. The catalysed reaction is thiamine(out) + ATP + H2O = thiamine(in) + ADP + phosphate + H(+). Functionally, part of the ABC transporter complex ThiBPQ involved in thiamine import. Responsible for energy coupling to the transport system. This Yersinia pseudotuberculosis serotype I (strain IP32953) protein is Thiamine import ATP-binding protein ThiQ.